The following is a 322-amino-acid chain: 26S proteasome non-ATPase regulatory subunit 7 (322 aa).

The 136-residue stretch at 9-144 folds into the MPN domain; the sequence is VVVHPLVLLS…TEAYISVEEV (136 aa). Lys180 participates in a covalent cross-link: Glycyl lysine isopeptide (Lys-Gly) (interchain with G-Cter in ubiquitin). An N6-acetyllysine mark is found at Lys204, Lys214, Lys314, and Lys315. A disordered region spans residues 281–322; it reads ANRDAEKKEGQEKEDSKKDRKDDKEKEKEKSDVKKEEKKEKK.

It belongs to the peptidase M67A family. As to quaternary structure, component of the 19S proteasome regulatory particle complex. The 26S proteasome consists of a 20S core particle (CP) and two 19S regulatory subunits (RP). The regulatory particle is made of a lid composed of 9 subunits including PSMD7, a base containing 6 ATPases and few additional components. Within the complex, PSMD7 interacts with subunit PSMD4 through their respective MPN domain. Interacts with TRIM5.

Component of the 26S proteasome, a multiprotein complex involved in the ATP-dependent degradation of ubiquitinated proteins. This complex plays a key role in the maintenance of protein homeostasis by removing misfolded or damaged proteins, which could impair cellular functions, and by removing proteins whose functions are no longer required. Therefore, the proteasome participates in numerous cellular processes, including cell cycle progression, apoptosis, or DNA damage repair. The polypeptide is 26S proteasome non-ATPase regulatory subunit 7 (PSMD7) (Bos taurus (Bovine)).